The sequence spans 326 residues: N-acetyl-gamma-glutamyl-phosphate reductase (326 aa).

Cysteine 155 is a catalytic residue.

The protein belongs to the NAGSA dehydrogenase family. Type 1 subfamily.

It localises to the cytoplasm. The enzyme catalyses N-acetyl-L-glutamate 5-semialdehyde + phosphate + NADP(+) = N-acetyl-L-glutamyl 5-phosphate + NADPH + H(+). Its pathway is amino-acid biosynthesis; L-arginine biosynthesis; N(2)-acetyl-L-ornithine from L-glutamate: step 3/4. Catalyzes the NADPH-dependent reduction of N-acetyl-5-glutamyl phosphate to yield N-acetyl-L-glutamate 5-semialdehyde. This chain is N-acetyl-gamma-glutamyl-phosphate reductase, found in Shewanella sp. (strain MR-4).